A 230-amino-acid chain; its full sequence is Thiamine-triphosphatase (230 aa).

N-acetylalanine is present on Ala2. A CYTH domain is found at 5–201 (LIEVERKFLP…AKLIVYLQRF (197 aa)). Residues Glu7 and Glu9 each contribute to the Mg(2+) site. Lys11, Arg55, Arg57, Lys65, and Arg125 together coordinate substrate. Asp145, Glu157, and Glu159 together coordinate Mg(2+). Position 157 (Glu157) interacts with substrate. Lys193 provides a ligand contact to substrate.

It belongs to the ThTPase family. As to quaternary structure, monomer. Mg(2+) is required as a cofactor. As to expression, widely expressed but at a low level.

The protein resides in the cytoplasm. The catalysed reaction is thiamine triphosphate + H2O = thiamine diphosphate + phosphate + H(+). In terms of biological role, hydrolase highly specific for thiamine triphosphate (ThTP). The polypeptide is Thiamine-triphosphatase (THTPA) (Homo sapiens (Human)).